A 529-amino-acid polypeptide reads, in one-letter code: MTLSPYLKEVAKRRTFAIISHPDAGKTTITEKVLLFGQAIQTAGTVKGRGSNQHAKSDWMEMEKQRGISITTSVMQFPYHDCLVNLLDTPGHEDFSEDTYRTLTAVDCCLMVIDAAKGVEDRTRKLMEVTRLRDTPILTFMNKLDRDIRDPMELLDEVENELKIGCAPITWPIGCGKLFKGVYHLYKDETYLYQSGKGHTIQEVRIVKGLNNPDLDAAVGEDLAQQLRDELELVKGASNEFDKELFLAGEITPVFFGTALGNFGVDHMLNGLVEWAPAPMPRQTDTRTVEASEDKFTGFVFKIQANMDPKHRDRVAFMRVVSGKYEKGMKLRQVRTAKDVVISDALTFMAGDRSHVEEAYPGDILGLHNHGTIQIGDTFTQGEMMKFTGIPNFAPELFRRIRLKDPLKQKQLLKGLVQLSEEGAVQVFRPISNNDLIVGAVGVLQFDVVVARLKSEYNVEAVYESVNVATARWVECADAKKFEEFKRKNESQLALDGGDNLAYIATSMVNLRLAQERYPDVQFHQTREH.

A tr-type G domain is found at 11 to 280; sequence AKRRTFAIIS…GLVEWAPAPM (270 aa). Residues 20–27, 88–92, and 142–145 each bind GTP; these read SHPDAGKT, DTPGH, and NKLD.

Belongs to the TRAFAC class translation factor GTPase superfamily. Classic translation factor GTPase family. PrfC subfamily.

It localises to the cytoplasm. Its function is as follows. Increases the formation of ribosomal termination complexes and stimulates activities of RF-1 and RF-2. It binds guanine nucleotides and has strong preference for UGA stop codons. It may interact directly with the ribosome. The stimulation of RF-1 and RF-2 is significantly reduced by GTP and GDP, but not by GMP. This is Peptide chain release factor 3 from Shigella flexneri.